Here is a 603-residue protein sequence, read N- to C-terminus: Terpenoid synthase 22 (603 aa).

The Mg(2+) site is built by Asp356, Asp360, Asn500, and Glu508. Positions 356 to 360 match the DDXXD motif motif; sequence DDTCD.

It belongs to the terpene synthase family. Tpsa subfamily. Mg(2+) serves as cofactor. It depends on Mn(2+) as a cofactor. In terms of tissue distribution, predominantly expressed in siliques but also in flowers.

It is found in the cytoplasm. It participates in secondary metabolite biosynthesis; terpenoid biosynthesis. Its function is as follows. Involved in terpene biosynthesis in roots. Possesses sesquiterpene (C15) synthase activity in vitro. Does not seem to be involved in diterpene (C20) biosynthesis. The sequence is that of Terpenoid synthase 22 from Arabidopsis thaliana (Mouse-ear cress).